The following is a 311-amino-acid chain: JNK1/MAPK8-associated membrane protein (311 aa).

The Lumenal segment spans residues 1–57; that stretch reads MAVDIQPACLGLYCGKTLLFKNGSSEIYGECGVCPRGQRTNAQKYCQPCTESPELYD. Residue Asn22 is glycosylated (N-linked (GlcNAc...) asparagine). The helical transmembrane segment at 58 to 78 threads the bilayer; sequence WLYLGFMAMLPLVLHWFFIEW. The Cytoplasmic segment spans residues 79-87; the sequence is YSGKKSSSA. Residues 88–108 form a helical membrane-spanning segment; it reads LFQHITALFECTMAAIITLLV. Residues 109–149 are Lumenal-facing; the sequence is SDPVGVLYIRSCRVLMLSDWYTMLYNPSPDYVTTVHCTHEA. A helical transmembrane segment spans residues 150–170; sequence VYPLYTIVFVYYAFCLVLMML. The Cytoplasmic portion of the chain corresponds to 171-188; the sequence is LRPLLVKKIACGLGKSDR. Residues 189-209 traverse the membrane as a helical segment; sequence FKSIYAALYFFPILTVLQAVG. Gly210 is a topological domain (lumenal). A helical transmembrane segment spans residues 211–231; it reads GLLYYAFPYIILVLSLVTLAV. The Cytoplasmic portion of the chain corresponds to 232–250; that stretch reads YMSASEIENCYDLLVRKKR. The helical transmembrane segment at 251–271 threads the bilayer; it reads LIVLFSHWLLHAYGIVSISRV. Residues 272 to 277 are Lumenal-facing; the sequence is DRLEHD. Residues 278-298 traverse the membrane as a helical segment; that stretch reads LPLLALVPTPALFYLFTAKFT. Residues 299 to 311 are Cytoplasmic-facing; the sequence is EPSRILSEGANGH.

Interacts with RNF5 and MAPK8, but not with MAPK9. Binding to MAPK8 occurs before and after exposure to stress, such as UV irradiation. After exposure to stress, interacts with phosphorylated MAPK8. Competes with DUSP10 for MAPK8 binding. Associates with multiple components of the proteasome and with ERAD regulatory proteins, including AMFR/GP78, CANX, PSMC1, PSMC2, PSMC3/TBP1, PSMC5, PSMC6, PSMD8, SEC61-ALPHA and UFD1. In terms of processing, ubiquitinated by RNF5 via 'Lys-63'-linked ubiquitin linkage in a UBE2N-dependent manner. Ubiquitination decreases association with components of the proteasome and ERAD. In terms of tissue distribution, expressed in numerous tissues, including brain, spleen, thymus, liver, kidney and testis.

The protein localises to the endoplasmic reticulum membrane. Regulates the duration of MAPK8 activity in response to various stress stimuli. Facilitates degradation of misfolded endoplasmic reticulum (ER) proteins through the recruitment of components of the proteasome and endoplasmic reticulum-associated degradation (ERAD) system. The protein is JNK1/MAPK8-associated membrane protein (Jkamp) of Mus musculus (Mouse).